Reading from the N-terminus, the 937-residue chain is Protocadherin alpha-7 (937 aa).

The first 29 residues, 1–29, serve as a signal peptide directing secretion; the sequence is MVNLRGYNWKSQQLLLFLIIVAAWEAGSG. The Extracellular segment spans residues 30-697; sequence QLHYSVPEEA…RVDQRLVDVN (668 aa). 6 consecutive Cadherin domains span residues 34–133, 157–242, 243–350, 351–455, 456–565, and 587–682; these read SVPE…PPMF, ASDA…APVF, DRSL…APQL, TVSS…APLF, AQPE…APTL, and PGQV…SSKV. Cysteine 96 and cysteine 102 form a disulfide bridge. Residues threonine 223 and threonine 225 are each glycosylated (O-linked (Man) threonine). N-linked (GlcNAc...) asparagine glycosylation is found at asparagine 257 and asparagine 265. O-linked (Man) threonine glycosylation is present at threonine 438. A glycan (O-linked (Man) serine) is linked at serine 478. A glycan (N-linked (GlcNAc...) asparagine) is linked at asparagine 548. A helical membrane pass occupies residues 698–718; the sequence is VYLIIAICAVSSLLVLTLLLY. Residues 719 to 937 lie on the Cytoplasmic side of the membrane; the sequence is TALRCSATPT…GNSTTDNSDQ (219 aa). 2 disordered regions span residues 755–794 and 816–843; these read RQRVCSGEGPPKTDLMAFSPSLPQGPSSTDNPRQPNPDWR and RAGPGGPDQQWPTVSSATPEPEAGEVSP. 5 PXXP repeats span residues 774–777, 786–789, 819–822, 860–863, and 878–881; these read PSLP, PRQP, PGGP, PGNP, and PGSP. Residues 774–881 are 5 X 4 AA repeats of P-X-X-P; it reads PSLPQGPSST…PDKFIIPGSP (108 aa). Residues 775–787 are compositionally biased toward polar residues; that stretch reads SLPQGPSSTDNPR. The tract at residues 887–937 is disordered; that stretch reads RQEPANNQIDKSDFITFGKKEETKKKKKKKKGNKTQEKKEKGNSTTDNSDQ. A compositionally biased stretch (basic and acidic residues) spans 896–910; it reads DKSDFITFGKKEETK.

In terms of assembly, forms homodimers in trans (molecules expressed by two different cells). Forms promiscuous heterodimers in cis (at the plasma membrane of the same cell) with other protocadherins.

Its subcellular location is the cell membrane. Calcium-dependent cell-adhesion protein involved in cells self-recognition and non-self discrimination. Thereby, it is involved in the establishment and maintenance of specific neuronal connections in the brain. This Mus musculus (Mouse) protein is Protocadherin alpha-7.